The sequence spans 2032 residues: Transient receptor potential channel (2032 aa).

The segment covering 129-139 (KKTRKHRRRRS) has biased composition (basic residues). Disordered stretches follow at residues 129–162 (KKTR…GHAI), 197–223 (QSKG…AVPT), 831–860 (KKAM…MGGV), 912–945 (ANPM…GSQT), and 1120–1211 (AAEH…EAGN). 3 stretches are compositionally biased toward polar residues: residues 839 to 855 (SRPS…QSTE), 935 to 945 (SLTSASDGSQT), and 1120 to 1129 (AAEHQNDMNY). The segment covering 1130 to 1149 (SSSSSSSSSSSSSSSSSDSS) has biased composition (low complexity). Residues 1171–1185 (TSQGSAQSLNITSLF) show a composition bias toward polar residues. The next 5 helical transmembrane spans lie at 1310–1330 (FWSW…TLLV), 1332–1352 (TPPR…AFGL), 1374–1394 (VCSF…VGFF), 1439–1459 (MIQN…SFGL), and 1535–1555 (LMTF…IAIF). Disordered stretches follow at residues 1753–1779 (GTDP…RIRR), 1853–1909 (HPER…SRDQ), 1935–1982 (EEED…EEVD), and 1999–2032 (LNEE…CSDV). Over residues 1935–1947 (EEEDEEEDDEEDD) the composition is skewed to acidic residues. The segment covering 1951–1962 (RHHIHPRRKSSR) has biased composition (basic residues). Residues 2016–2032 (SPSSSRADLTSQKCSDV) are compositionally biased toward polar residues.

It belongs to the transient receptor (TC 1.A.4) family. LTrpC subfamily. Gonads.

It is found in the membrane. Functionally, required for initiation and continuation of postembryonic mitotic cell divisions of gonadal cells Z1 and Z4. Zygotic expression is necessary for hermaphrodite fertility. May be a cation channel. The sequence is that of Transient receptor potential channel (gon-2) from Caenorhabditis elegans.